The following is a 319-amino-acid chain: Probable cytochrome c oxidase subunit 2 (319 aa).

The signal sequence occupies residues 1 to 33 (MSPNGSDRSPRRPMRRKLLQALTAGLVLATATG). A run of 2 helical transmembrane segments spans residues 63 to 83 (WAAA…SVFF) and 101 to 121 (LPIE…LFYF). 4 residues coordinate Cu cation: His227, Cys262, Cys266, and His270.

Belongs to the cytochrome c oxidase subunit 2 family. The cofactor is Cu cation. Requires heme as cofactor.

The protein resides in the cell membrane. The enzyme catalyses 4 Fe(II)-[cytochrome c] + O2 + 8 H(+)(in) = 4 Fe(III)-[cytochrome c] + 2 H2O + 4 H(+)(out). Its function is as follows. Subunits I and II form the functional core of the enzyme complex. Electrons originating in cytochrome c are transferred via heme a and Cu(A) to the binuclear center formed by heme a3 and Cu(B). This is Probable cytochrome c oxidase subunit 2 (ctaC) from Streptomyces coelicolor (strain ATCC BAA-471 / A3(2) / M145).